A 203-amino-acid polypeptide reads, in one-letter code: FMN-dependent NADH:quinone oxidoreductase (203 aa).

Residues serine 9 and 15–17 (SKS) each bind FMN.

This sequence belongs to the azoreductase type 1 family. As to quaternary structure, homodimer. FMN is required as a cofactor.

The enzyme catalyses 2 a quinone + NADH + H(+) = 2 a 1,4-benzosemiquinone + NAD(+). It catalyses the reaction N,N-dimethyl-1,4-phenylenediamine + anthranilate + 2 NAD(+) = 2-(4-dimethylaminophenyl)diazenylbenzoate + 2 NADH + 2 H(+). Its function is as follows. Quinone reductase that provides resistance to thiol-specific stress caused by electrophilic quinones. In terms of biological role, also exhibits azoreductase activity. Catalyzes the reductive cleavage of the azo bond in aromatic azo compounds to the corresponding amines. This Bordetella avium (strain 197N) protein is FMN-dependent NADH:quinone oxidoreductase.